The following is a 674-amino-acid chain: Anosmin-1 (674 aa).

Positions 1–21 are cleaved as a signal peptide; it reads MVRRAPGASLALLLWVTAVSC. Disulfide bonds link Cys47/Cys71, Cys80/Cys99, Cys84/Cys95, and Cys110/Cys114. The N-linked (GlcNAc...) asparagine glycan is linked to Asn65. In terms of domain architecture, WAP spans 121–170; the sequence is LSVKQGDCPAPEKASGFAAACFESCEADSECSGVKKCCSNGCGHTCQVPK. 4 Fibronectin type-III domains span residues 180 to 281, 286 to 392, 418 to 515, and 545 to 652; these read PRKE…SKDP, APSN…TTQD, RRKP…FFVT, and KPEN…DLPP. Residues Asn203 and Asn294 are each glycosylated (N-linked (GlcNAc...) asparagine). Residues 388–402 show a composition bias toward polar residues; that stretch reads STTQDNRNNNEQTSV. A disordered region spans residues 388 to 413; it reads STTQDNRNNNEQTSVEKPPKGVVDPY. Asn465, Asn548, and Asn559 each carry an N-linked (GlcNAc...) asparagine glycan. The disordered stretch occupies residues 655–674; the sequence is PHRPHLKHHPHRYKPPPEKY. Residues 656-668 show a composition bias toward basic residues; sequence HRPHLKHHPHRYK.

It localises to the cell surface. In terms of biological role, may be an adhesion-like molecule with anti-protease activity. This chain is Anosmin-1, found in Coturnix japonica (Japanese quail).